Here is a 556-residue protein sequence, read N- to C-terminus: DNA ligase B (556 aa).

The N6-AMP-lysine intermediate role is filled by lysine 124.

It belongs to the NAD-dependent DNA ligase family. LigB subfamily.

It catalyses the reaction NAD(+) + (deoxyribonucleotide)n-3'-hydroxyl + 5'-phospho-(deoxyribonucleotide)m = (deoxyribonucleotide)n+m + AMP + beta-nicotinamide D-nucleotide.. In terms of biological role, catalyzes the formation of phosphodiester linkages between 5'-phosphoryl and 3'-hydroxyl groups in double-stranded DNA using NAD as a coenzyme and as the energy source for the reaction. The polypeptide is DNA ligase B (Pseudomonas fluorescens (strain ATCC BAA-477 / NRRL B-23932 / Pf-5)).